We begin with the raw amino-acid sequence, 431 residues long: D-tagatose-1,6-bisphosphate aldolase subunit KbaZ (431 aa).

Belongs to the GatZ/KbaZ family. KbaZ subfamily. As to quaternary structure, forms a complex with KbaY.

It functions in the pathway carbohydrate metabolism; D-tagatose 6-phosphate degradation; D-glyceraldehyde 3-phosphate and glycerone phosphate from D-tagatose 6-phosphate: step 2/2. Its function is as follows. Component of the tagatose-1,6-bisphosphate aldolase KbaYZ that is required for full activity and stability of the Y subunit. Could have a chaperone-like function for the proper and stable folding of KbaY. When expressed alone, KbaZ does not show any aldolase activity. This Salmonella arizonae (strain ATCC BAA-731 / CDC346-86 / RSK2980) protein is D-tagatose-1,6-bisphosphate aldolase subunit KbaZ.